We begin with the raw amino-acid sequence, 302 residues long: N-acetylmuramic acid 6-phosphate etherase (302 aa).

In terms of domain architecture, SIS spans 58-221 (IFERFKKGGR…TTTLMIKLGK (164 aa)). The Proton donor role is filled by glutamate 86. The active site involves glutamate 117.

This sequence belongs to the GCKR-like family. MurNAc-6-P etherase subfamily. As to quaternary structure, homodimer.

The catalysed reaction is N-acetyl-D-muramate 6-phosphate + H2O = N-acetyl-D-glucosamine 6-phosphate + (R)-lactate. Its pathway is amino-sugar metabolism; N-acetylmuramate degradation. Functionally, specifically catalyzes the cleavage of the D-lactyl ether substituent of MurNAc 6-phosphate, producing GlcNAc 6-phosphate and D-lactate. The chain is N-acetylmuramic acid 6-phosphate etherase from Mycoplasma mycoides subsp. mycoides SC (strain CCUG 32753 / NCTC 10114 / PG1).